Reading from the N-terminus, the 759-residue chain is uncharacterized protein (759 aa).

2 disordered regions span residues serine 269–proline 328 and leucine 406–alanine 759. Positions alanine 289–glycine 299 are enriched in basic and acidic residues. Residues leucine 406 to glycine 415 are compositionally biased toward low complexity. Positions alanine 417 to glycine 430 are enriched in basic and acidic residues. The segment covering arginine 431–arginine 444 has biased composition (low complexity). 2 stretches are compositionally biased toward basic and acidic residues: residues proline 469–histidine 518 and aspartate 525–threonine 545. Pro residues predominate over residues tryptophan 585–serine 599. The segment covering serine 659–serine 680 has biased composition (low complexity). Pro residues predominate over residues proline 681–proline 690. Low complexity-rich tracts occupy residues serine 691–proline 704 and proline 728–proline 746.

This is an uncharacterized protein from Human herpesvirus 6B (strain Z29) (HHV-6 variant B).